Reading from the N-terminus, the 496-residue chain is Glycerol kinase (496 aa).

Thr14 contacts ADP. Residues Thr14 and Thr15 each coordinate ATP. Residue Thr14 participates in sn-glycerol 3-phosphate binding. Positions 84, 85, 136, and 246 each coordinate sn-glycerol 3-phosphate. The glycerol site is built by Arg84, Glu85, Tyr136, Asp246, and Gln247. ADP is bound by residues Thr268 and Gly313. 4 residues coordinate ATP: Thr268, Gly313, Gln317, and Gly414. Residues Gly414 and Asn418 each contribute to the ADP site.

Belongs to the FGGY kinase family.

It catalyses the reaction glycerol + ATP = sn-glycerol 3-phosphate + ADP + H(+). It participates in polyol metabolism; glycerol degradation via glycerol kinase pathway; sn-glycerol 3-phosphate from glycerol: step 1/1. Its activity is regulated as follows. Inhibited by fructose 1,6-bisphosphate (FBP). Functionally, key enzyme in the regulation of glycerol uptake and metabolism. Catalyzes the phosphorylation of glycerol to yield sn-glycerol 3-phosphate. The polypeptide is Glycerol kinase (Myxococcus xanthus (strain DK1622)).